The sequence spans 335 residues: HTH-type transcriptional regulator RipA (335 aa).

Residues 119–216 enclose the HTH araC/xylS-type domain; that stretch reads RKVAQKLIAY…GDTPSSFTSP (98 aa). 2 consecutive DNA-binding regions (H-T-H motif) follow at residues 136 to 157 and 183 to 206; these read LEFA…VAST and IGQV…KRHT.

In terms of biological role, under iron limitation, represses the acn (aconitase), catA (catechol 1,2 dioxygenase), leuCD (isopropylmalate dehydratase), narKGHJI (nitrite/nitrate transporter and nitrate reductase), sdhCAB (succinate dehydrogenase), pta (phosphotransacetylase) and katA (catalase) genes. The protein is HTH-type transcriptional regulator RipA of Corynebacterium diphtheriae (strain ATCC 700971 / NCTC 13129 / Biotype gravis).